The following is a 224-amino-acid chain: ATP-dependent dethiobiotin synthetase BioD (224 aa).

Residue 14–19 (GIGKTV) participates in ATP binding. Thr18 is a binding site for Mg(2+). The active site involves Lys39. Ser43 lines the substrate pocket. Residues Asp56, 117 to 120 (EGVG), and 177 to 178 (NE) contribute to the ATP site. Mg(2+)-binding residues include Asp56 and Glu117.

It belongs to the dethiobiotin synthetase family. As to quaternary structure, homodimer. It depends on Mg(2+) as a cofactor.

Its subcellular location is the cytoplasm. It carries out the reaction (7R,8S)-7,8-diammoniononanoate + CO2 + ATP = (4R,5S)-dethiobiotin + ADP + phosphate + 3 H(+). The protein operates within cofactor biosynthesis; biotin biosynthesis; biotin from 7,8-diaminononanoate: step 1/2. Catalyzes a mechanistically unusual reaction, the ATP-dependent insertion of CO2 between the N7 and N8 nitrogen atoms of 7,8-diaminopelargonic acid (DAPA, also called 7,8-diammoniononanoate) to form a ureido ring. The sequence is that of ATP-dependent dethiobiotin synthetase BioD from Xanthomonas campestris pv. campestris (strain 8004).